The sequence spans 282 residues: 2-dehydro-3-deoxyphosphooctonate aldolase (282 aa).

The protein belongs to the KdsA family.

Its subcellular location is the cytoplasm. The catalysed reaction is D-arabinose 5-phosphate + phosphoenolpyruvate + H2O = 3-deoxy-alpha-D-manno-2-octulosonate-8-phosphate + phosphate. The protein operates within carbohydrate biosynthesis; 3-deoxy-D-manno-octulosonate biosynthesis; 3-deoxy-D-manno-octulosonate from D-ribulose 5-phosphate: step 2/3. It participates in bacterial outer membrane biogenesis; lipopolysaccharide biosynthesis. The protein is 2-dehydro-3-deoxyphosphooctonate aldolase of Shewanella amazonensis (strain ATCC BAA-1098 / SB2B).